Reading from the N-terminus, the 117-residue chain is MAFSGRARPCIIPENEEIPRAALNTVHEANGTEDERAVSKLQRRHSDVKVYKEFCDFYAKFNMANALASATCERCKGGFAPAETIVNSNGELYHEQCFVCAQCFQQFPEGLFYEERT.

An LIM zinc-binding domain is found at 70 to 117; it reads ATCERCKGGFAPAETIVNSNGELYHEQCFVCAQCFQQFPEGLFYEERT.

Detected in testis.

Its subcellular location is the cytoplasm. This is LIM and senescent cell antigen-like-containing domain protein 3 (LIMS3) from Homo sapiens (Human).